Reading from the N-terminus, the 515-residue chain is uncharacterized protein (515 aa).

The next 3 helical transmembrane spans lie at 1–21, 165–185, and 199–219; these read MSFV…LAGI, IGGP…GLLF, and GPVG…GLFG. One can recognise a PE domain in the interval 1 to 93; the sequence is MSFVVAAPEV…AGAYAGAEAA (93 aa). Gly residues predominate over residues 349–360; the sequence is GGTLIGNGGDGG. Disordered stretches follow at residues 349-368 and 463-515; these read GGTL…TDGF and GVSG…SPGG.

The protein belongs to the mycobacterial PE family. PGRS subfamily.

It is found in the cell membrane. This is an uncharacterized protein from Mycobacterium tuberculosis (strain CDC 1551 / Oshkosh).